Consider the following 224-residue polypeptide: uncharacterized protein (224 aa).

This is an uncharacterized protein from Acidianus hospitalis (AFV-1).